Consider the following 600-residue polypeptide: MNNQKYIRNFSIIAHIDHGKSTLADRLIEYCGGLNAREMSQQVLDSMDIERERGITIKAQTVRLVYKAKNGNTYYLNLMDTPGHVDFAYEVSRSLAACEGSLLVVDSTQGVEAQTLANVYQAIANDHLIVPVLNKIDLAASEPDYVKTQIEDIIGIDASEAVLISAKNGIGIDSVLEAIINKLPAPKESSTDILKALLVDSWYDPYLGVVILVRIIDGALRKNMRVKMMRTNSVYTVEHVGFFTPKKHISDVLYAGEIGFFTASIKRVSDCKVGDTITDEKKSCEQALPGFKPNIPVVFCGFYPTDSAEFEHLKDSLAKLRLNDASFEYEMESSSALGVGFRCGFLGLLHLEIIQERLSREFDLDLITTAPSVIYKINMLDGQNLEIHNPADLPDLQKIASMEEPWIKATIIVPDEFIGTVLSLCTEKRGIQLDHSYISNRAKIVYKLPLNEIVYDFYDRLKSCSKGYASFEWQMDVYELSDLVNLRILVNGEVVDALSTIVHRSRAEQRGRALCIRLKDLIPRQQIDIAIQASVGSRIIARETIKALRKDVLSKCYGGDISRKRKLLEKQKAGKKKMRQYGNIEIPQSAFIAALQIGGE.

The tr-type G domain occupies 5–187 (KYIRNFSIIA…AIINKLPAPK (183 aa)). Residues 17 to 22 (DHGKST) and 134 to 137 (NKID) each bind GTP.

This sequence belongs to the TRAFAC class translation factor GTPase superfamily. Classic translation factor GTPase family. LepA subfamily.

Its subcellular location is the cell inner membrane. The enzyme catalyses GTP + H2O = GDP + phosphate + H(+). Its function is as follows. Required for accurate and efficient protein synthesis under certain stress conditions. May act as a fidelity factor of the translation reaction, by catalyzing a one-codon backward translocation of tRNAs on improperly translocated ribosomes. Back-translocation proceeds from a post-translocation (POST) complex to a pre-translocation (PRE) complex, thus giving elongation factor G a second chance to translocate the tRNAs correctly. Binds to ribosomes in a GTP-dependent manner. This is Elongation factor 4 from Rickettsia prowazekii (strain Madrid E).